The primary structure comprises 425 residues: 2-methylserine hydroxymethyltransferase (425 aa).

Residues L126 and 130–132 contribute to the (6S)-5,6,7,8-tetrahydrofolate site; that span reads GHL. K235 bears the N6-(pyridoxal phosphate)lysine mark. E251 is a binding site for (6S)-5,6,7,8-tetrahydrofolate.

This sequence belongs to the SHMT family. In terms of assembly, homodimer. The cofactor is pyridoxal 5'-phosphate.

It is found in the cytoplasm. The enzyme catalyses (6R)-5,10-methylene-5,6,7,8-tetrahydrofolate + D-alanine + H2O = 2-methylserine + (6S)-5,6,7,8-tetrahydrofolate. It functions in the pathway one-carbon metabolism; tetrahydrofolate interconversion. Inhibited by hydroxylamine and sodium borohydride. Catalyzes the reversible interconversion of alpha-methyl-L-serine to D-alanine with tetrahydrofolate (THF) serving as the one-carbon carrier. Cannot use alpha-methyl-D-serine, L-serine, D-serine or L-alanine. The chain is 2-methylserine hydroxymethyltransferase from Paracoccus sp.